Consider the following 504-residue polypeptide: Glucose-6-phosphate isomerase (504 aa).

Glu-333 (proton donor) is an active-site residue. Catalysis depends on residues His-364 and Lys-473.

Belongs to the GPI family.

The protein resides in the cytoplasm. The enzyme catalyses alpha-D-glucose 6-phosphate = beta-D-fructose 6-phosphate. Its pathway is carbohydrate biosynthesis; gluconeogenesis. It participates in carbohydrate degradation; glycolysis; D-glyceraldehyde 3-phosphate and glycerone phosphate from D-glucose: step 2/4. Catalyzes the reversible isomerization of glucose-6-phosphate to fructose-6-phosphate. The protein is Glucose-6-phosphate isomerase of Xanthomonas campestris pv. campestris (strain B100).